The following is a 110-amino-acid chain: Putative membrane protein insertion efficiency factor (110 aa).

Belongs to the UPF0161 family.

The protein localises to the cell inner membrane. Its function is as follows. Could be involved in insertion of integral membrane proteins into the membrane. This Campylobacter hominis (strain ATCC BAA-381 / DSM 21671 / CCUG 45161 / LMG 19568 / NCTC 13146 / CH001A) protein is Putative membrane protein insertion efficiency factor.